The following is a 272-amino-acid chain: Probable glutathione S-transferase DHAR2, chloroplastic (272 aa).

Residues 1 to 57 constitute a chloroplast transit peptide; it reads MAVLLRTTTSATTATSGGSSSATALLATTFRRGGRRLLLLPATRGSAPRRAALLTAR. Residues lysine 68 and aspartate 79 each contribute to the glutathione site. L-ascorbate contacts are provided by lysine 68 and aspartate 79. In terms of domain architecture, GST N-terminal spans 70-148; sequence SLTVPDRLGD…AIEEKYPEPS (79 aa). The Nucleophile role is filled by cysteine 80. Residues lysine 107, valine 120, serine 133, histidine 219, and tryptophan 266 each coordinate glutathione. The region spanning 126–272 is the GST C-terminal domain; sequence EEQWVADSDV…IAGWRPKVMG (147 aa). Lysine 269 contacts L-ascorbate.

This sequence belongs to the GST superfamily. DHAR family. Monomer.

It is found in the plastid. The protein localises to the chloroplast. The catalysed reaction is RX + glutathione = an S-substituted glutathione + a halide anion + H(+). It carries out the reaction L-dehydroascorbate + 2 glutathione = glutathione disulfide + L-ascorbate. Its function is as follows. Involved in ascorbate homeostasis. Maintains redox pools of ascorbate by recycling dihydroascorbate (DHA) to ascorbate. Involved in scavenging reactive oxygen species (ROS) under oxidative stresses. This is Probable glutathione S-transferase DHAR2, chloroplastic from Oryza sativa subsp. japonica (Rice).